The primary structure comprises 72 residues: NAD(P)H-quinone oxidoreductase subunit O (72 aa).

This sequence belongs to the complex I NdhO subunit family. In terms of assembly, NDH-1 can be composed of about 15 different subunits; different subcomplexes with different compositions have been identified which probably have different functions.

Its subcellular location is the cellular thylakoid membrane. It carries out the reaction a plastoquinone + NADH + (n+1) H(+)(in) = a plastoquinol + NAD(+) + n H(+)(out). The catalysed reaction is a plastoquinone + NADPH + (n+1) H(+)(in) = a plastoquinol + NADP(+) + n H(+)(out). Functionally, NDH-1 shuttles electrons from an unknown electron donor, via FMN and iron-sulfur (Fe-S) centers, to quinones in the respiratory and/or the photosynthetic chain. The immediate electron acceptor for the enzyme in this species is believed to be plastoquinone. Couples the redox reaction to proton translocation, and thus conserves the redox energy in a proton gradient. Cyanobacterial NDH-1 also plays a role in inorganic carbon-concentration. The polypeptide is NAD(P)H-quinone oxidoreductase subunit O (Synechococcus elongatus (strain ATCC 33912 / PCC 7942 / FACHB-805) (Anacystis nidulans R2)).